Reading from the N-terminus, the 139-residue chain is S-adenosyl-L-methionine-binding protein AF_0241 (139 aa).

In terms of domain architecture, TsaA-like spans 3–133 (LKPIGVVKSP…YSPEIDCVNQ (131 aa)). S-adenosyl-L-methionine contacts are provided by residues Gln16, 20–22 (PRQ), 58–59 (DK), Arg82, Leu92, and 113–116 (LDGS).

Belongs to the tRNA methyltransferase O family. In terms of assembly, homodimer.

This Archaeoglobus fulgidus (strain ATCC 49558 / DSM 4304 / JCM 9628 / NBRC 100126 / VC-16) protein is S-adenosyl-L-methionine-binding protein AF_0241.